A 178-amino-acid chain; its full sequence is MEFFMKKVVFALTALALTSGTVFAAESGDGTVKFTGEIVDSPCVLSVDSQNQEVVLGQVQKSVFAAVGDKSPAKPFEIKLEDCDTTTMKKANVSFSGVGDADKSDLISVSTEAGAAKGVGIGIYDNSNTLVALNGGKASVDLSKGQTVLYFTANYVSTLATVTTGYGNAQVDFNLSYE.

The signal sequence occupies residues Met1 to Ala24.

Belongs to the fimbrial protein family.

The protein localises to the fimbrium. Functionally, part of the lpfABCC'DE fimbrial operon. LP fimbriae may participate in the interaction with eukaryotic cells by assisting in microcolony formation. This is Probable major fimbrial subunit LpfA (lpfA) from Escherichia coli O157:H7.